A 486-amino-acid polypeptide reads, in one-letter code: mRNA cap guanine-N(7) methyltransferase (486 aa).

Positions 1 to 92 are disordered; the sequence is MAGGADLDEP…ADRKAARERA (92 aa). Basic and acidic residues-rich tracts occupy residues 9–28, 35–54, and 82–92; these read EPPRQSDSTTDRKRPADSTH, VPRDRAGNKTYDISKLEPAR, and EADRKAARERA. An mRNA cap 0 methyltransferase domain is found at 135–486; it reads SRIKGLRSFN…FYVGFCFYKV (352 aa). Residue 144-145 coordinates mRNA; that stretch reads NN. S-adenosyl-L-methionine contacts are provided by residues K148, G177, D201, D247, 281–283, and Y286; that span reads MFC. The segment covering 333 to 351 has biased composition (basic and acidic residues); it reads VEMKKKQAEAGDGSKKDDG. Residues 333–365 form a disordered region; the sequence is VEMKKKQAEAGDGSKKDDGGDAEEGELDEPEVE. Acidic residues predominate over residues 352–363; it reads GDAEEGELDEPE.

This sequence belongs to the class I-like SAM-binding methyltransferase superfamily. mRNA cap 0 methyltransferase family.

It is found in the nucleus. The enzyme catalyses a 5'-end (5'-triphosphoguanosine)-ribonucleoside in mRNA + S-adenosyl-L-methionine = a 5'-end (N(7)-methyl 5'-triphosphoguanosine)-ribonucleoside in mRNA + S-adenosyl-L-homocysteine. Responsible for methylating the 5'-cap structure of mRNAs. This Pyricularia oryzae (strain 70-15 / ATCC MYA-4617 / FGSC 8958) (Rice blast fungus) protein is mRNA cap guanine-N(7) methyltransferase (ABD1).